The primary structure comprises 72 residues: Translation initiation factor IF-1 (72 aa).

Positions 1 to 72 (MAKEEMLEFP…TKGRINYRFK (72 aa)) constitute an S1-like domain.

Belongs to the IF-1 family. Component of the 30S ribosomal translation pre-initiation complex which assembles on the 30S ribosome in the order IF-2 and IF-3, IF-1 and N-formylmethionyl-tRNA(fMet); mRNA recruitment can occur at any time during PIC assembly.

The protein localises to the cytoplasm. In terms of biological role, one of the essential components for the initiation of protein synthesis. Stabilizes the binding of IF-2 and IF-3 on the 30S subunit to which N-formylmethionyl-tRNA(fMet) subsequently binds. Helps modulate mRNA selection, yielding the 30S pre-initiation complex (PIC). Upon addition of the 50S ribosomal subunit IF-1, IF-2 and IF-3 are released leaving the mature 70S translation initiation complex. The polypeptide is Translation initiation factor IF-1 (Jannaschia sp. (strain CCS1)).